Here is a 535-residue protein sequence, read N- to C-terminus: Light-independent protochlorophyllide reductase subunit B (535 aa).

Asp36 provides a ligand contact to [4Fe-4S] cluster. The active-site Proton donor is the Asp292. 428–429 serves as a coordination point for substrate; the sequence is GL.

Belongs to the ChlB/BchB/BchZ family. In terms of assembly, protochlorophyllide reductase is composed of three subunits; BchL, BchN and BchB. Forms a heterotetramer of two BchB and two BchN subunits. It depends on [4Fe-4S] cluster as a cofactor.

It carries out the reaction chlorophyllide a + oxidized 2[4Fe-4S]-[ferredoxin] + 2 ADP + 2 phosphate = protochlorophyllide a + reduced 2[4Fe-4S]-[ferredoxin] + 2 ATP + 2 H2O. It functions in the pathway porphyrin-containing compound metabolism; bacteriochlorophyll biosynthesis (light-independent). Functionally, component of the dark-operative protochlorophyllide reductase (DPOR) that uses Mg-ATP and reduced ferredoxin to reduce ring D of protochlorophyllide (Pchlide) to form chlorophyllide a (Chlide). This reaction is light-independent. The NB-protein (BchN-BchB) is the catalytic component of the complex. The sequence is that of Light-independent protochlorophyllide reductase subunit B from Pelodictyon phaeoclathratiforme (strain DSM 5477 / BU-1).